A 442-amino-acid polypeptide reads, in one-letter code: Elongation factor 1-alpha (442 aa).

In terms of domain architecture, tr-type G spans 6–229 (KPHMNLIVIG…ALDNLKPPSV (224 aa)). The segment at 15–22 (GHVDHGKS) is G1. 15–22 (GHVDHGKS) is a GTP binding site. Ser22 serves as a coordination point for Mg(2+). Residues 71 to 75 (GVTID) are G2. The G3 stretch occupies residues 92–95 (DAPG). GTP contacts are provided by residues 92–96 (DAPGH) and 154–157 (NKMD). A G4 region spans residues 154–157 (NKMD). A G5 region spans residues 195-197 (SAW).

Belongs to the TRAFAC class translation factor GTPase superfamily. Classic translation factor GTPase family. EF-Tu/EF-1A subfamily.

The protein localises to the cytoplasm. It catalyses the reaction GTP + H2O = GDP + phosphate + H(+). Its function is as follows. GTP hydrolase that promotes the GTP-dependent binding of aminoacyl-tRNA to the A-site of ribosomes during protein biosynthesis. The polypeptide is Elongation factor 1-alpha (Ignicoccus hospitalis (strain KIN4/I / DSM 18386 / JCM 14125)).